Reading from the N-terminus, the 61-residue chain is Large ribosomal subunit protein bL32 (61 aa).

Positions 1–16 (MAVPKRKTSPSKRGMR) are enriched in basic residues. The tract at residues 1–61 (MAVPKRKTSP…RSVLTPKNSG (61 aa)) is disordered. Basic and acidic residues predominate over residues 28 to 44 (VEDKDSGELRRPHHIDL).

Belongs to the bacterial ribosomal protein bL32 family.

This chain is Large ribosomal subunit protein bL32, found in Bartonella bacilliformis (strain ATCC 35685 / KC583 / Herrer 020/F12,63).